Here is a 203-residue protein sequence, read N- to C-terminus: V-type ATP synthase subunit D (203 aa).

It belongs to the V-ATPase D subunit family.

Produces ATP from ADP in the presence of a proton gradient across the membrane. This is V-type ATP synthase subunit D (atpD) from Chlamydia muridarum (strain MoPn / Nigg).